The primary structure comprises 348 residues: Spermidine/putrescine import ATP-binding protein PotA (348 aa).

The region spanning 6-236 (IRLVNVTKEY…PKNVFVADFI (231 aa)) is the ABC transporter domain. 38 to 45 (GPSGCGKT) contacts ATP.

It belongs to the ABC transporter superfamily. Spermidine/putrescine importer (TC 3.A.1.11.1) family. In terms of assembly, the complex is composed of two ATP-binding proteins (PotA), two transmembrane proteins (PotB and PotC) and a solute-binding protein (PotD).

It localises to the cell membrane. The catalysed reaction is ATP + H2O + polyamine-[polyamine-binding protein]Side 1 = ADP + phosphate + polyamineSide 2 + [polyamine-binding protein]Side 1.. Part of the ABC transporter complex PotABCD involved in spermidine/putrescine import. Responsible for energy coupling to the transport system. In Desulfitobacterium hafniense (strain Y51), this protein is Spermidine/putrescine import ATP-binding protein PotA.